Consider the following 423-residue polypeptide: MAAHQMDSITYSNNVTQQYIQPQSLQDISAVEDEIQNKIEAARQESKQLHAQINKAKHKIQDASLFQMANKVTSLTKNKINLKPNIVLKGHNNKISDFRWSRDSKRILSASQDGFMLIWDSASGLKQNAIPLDSQWVLSCAISPSSTLVASAGLNNNCTIYRVSKENRVAQNVASIFKGHTCYISDIEFTDNAHILTASGDMTCALWDIPKAKRVREYSDHLGDVLALAIPEEPNSENSSNTFASCGSDGYTYIWDSRSPSAVQSFYVNDSDINALRFFKDGMSIVAGSDNGAINMYDLRSDCSIATFSLFRGYEERTPTPTYMAANMEYNTAQSPQTLKSTSSSYLDNQGVVSLDFSASGRLMYSCYTDIGCVVWDVLKGEIVGKLEGHGGRVTGVRSSPDGLAVCTGSWDSTMKIWSPGYQ.

WD repeat units lie at residues 90–120, 132–162, 179–208, 220–256, 268–298, 348–377, and 389–419; these read GHNN…LIWD, LDSQ…TIYR, GHTC…ALWD, DHLG…YIWD, VNDS…NMYD, DNQG…VVWD, and GHGG…KIWS.

This sequence belongs to the WD repeat G protein beta family. G proteins are composed of 3 units, alpha, beta and gamma. The beta-gamma subunit complex (STE4-STE18 complex) interacts with PLP1 and PLP2. Interacts with SYG1.

In terms of biological role, implicated in the a- and alpha-factor response pathway. The beta and gamma chains of the putative yeast mating response pathway G protein play a positive role in initiation of the mating response. The beta and gamma chains are required for the GTPase activity, for replacement of GDP by GTP, and for G protein-effector interaction. The protein is Guanine nucleotide-binding protein subunit beta (STE4) of Saccharomyces cerevisiae (strain ATCC 204508 / S288c) (Baker's yeast).